The chain runs to 442 residues: 3-dehydroquinate synthase, chloroplastic (442 aa).

Residues 1–58 constitute a chloroplast transit peptide; that stretch reads MAANTISLSNVAASKNLNSFQSRAFIAPPTIFFPVASAKSKPGELSLSSTTLSRSRVR. Position 59 is an N-acetylalanine (Ala-59). Residues Asn-119, 150-152, Lys-155, 183-188, 208-209, Lys-221, Lys-230, and 248-251 each bind NAD(+); these read DGE, GGVIGD, TT, and TLNT. Glu-263 serves as a coordination point for a divalent metal cation. Lys-305 is a binding site for NAD(+). Residues His-326 and His-343 each contribute to the a divalent metal cation site.

The protein belongs to the sugar phosphate cyclases superfamily. Dehydroquinate synthase family. As to quaternary structure, homodimer. A divalent metal cation is required as a cofactor. Requires NAD(+) as cofactor.

The protein resides in the plastid. It is found in the chloroplast. It carries out the reaction 7-phospho-2-dehydro-3-deoxy-D-arabino-heptonate = 3-dehydroquinate + phosphate. The protein operates within metabolic intermediate biosynthesis; chorismate biosynthesis; chorismate from D-erythrose 4-phosphate and phosphoenolpyruvate: step 2/7. In terms of biological role, catalyzes the second step in the shikimate pathway. The protein is 3-dehydroquinate synthase, chloroplastic (DHQS) of Arabidopsis thaliana (Mouse-ear cress).